The chain runs to 741 residues: Zinc finger and BTB domain-containing protein 20 (741 aa).

The segment covering 1-17 (MLERKKPKTAENQKASE) has biased composition (basic and acidic residues). The segment at 1–28 (MLERKKPKTAENQKASEENEITQPGGSS) is disordered. Residues 104–167 (CDVTVRIHGS…MYSGVLRVSQ (64 aa)) enclose the BTB domain. A disordered region spans residues 203–235 (GIQDSGQDTPRGTPESGTSGQSSDTESGYLQSH). A compositionally biased stretch (polar residues) spans 206 to 235 (DSGQDTPRGTPESGTSGQSSDTESGYLQSH). Residue threonine 211 is modified to Phosphothreonine. Lysine 330 participates in a covalent cross-link: Glycyl lysine isopeptide (Lys-Gly) (interchain with G-Cter in SUMO1); alternate. A Glycyl lysine isopeptide (Lys-Gly) (interchain with G-Cter in SUMO2); alternate cross-link involves residue lysine 330. Positions 350 to 440 (RNESEECTED…SSPERSNESE (91 aa)) are disordered. Position 353 is a phosphoserine (serine 353). The segment covering 354–367 (EECTEDTDQAEGTE) has biased composition (acidic residues). Threonine 357 bears the Phosphothreonine mark. Lysine 371 is covalently cross-linked (Glycyl lysine isopeptide (Lys-Gly) (interchain with G-Cter in SUMO2)). A compositionally biased stretch (low complexity) spans 404–423 (AEPAQPEQAAEAPAESSAQP). C2H2-type zinc fingers lie at residues 578–600 (YECT…MFVH), 606–628 (HQCS…MVTH), 634–656 (YQCS…MRLH), and 662–684 (YECY…VALH). Residues threonine 690 and threonine 695 each carry the phosphothreonine modification. A C2H2-type 5 zinc finger spans residues 715–737 (YVCSVCPAKFDQIEQFNDHMRMH). Lysine 723 participates in a covalent cross-link: Glycyl lysine isopeptide (Lys-Gly) (interchain with G-Cter in SUMO2).

Can homodimerize. Binds to DNA. In terms of processing, sumoylated with SUMO1. As to expression, specifically expressed in early hippocampal neurons, cerebellar granule cells and gliogenic progenitors as well as in differentiated glia. Expressed in adult and aged myogenic satellite cells.

The protein resides in the nucleus. May be a transcription factor that may be involved in hematopoiesis, oncogenesis, and immune responses. Plays a role in postnatal myogenesis, may be involved in the regulation of satellite cells self-renewal. This chain is Zinc finger and BTB domain-containing protein 20 (Zbtb20), found in Mus musculus (Mouse).